We begin with the raw amino-acid sequence, 99 residues long: Ferredoxin, heterocyst (99 aa).

The region spanning 4-96 (YQVRLINKKQ…NCTIKTHQEP (93 aa)) is the 2Fe-2S ferredoxin-type domain. Positions 42, 47, 50, and 80 each coordinate [2Fe-2S] cluster.

Belongs to the 2Fe2S plant-type ferredoxin family. It depends on [2Fe-2S] cluster as a cofactor.

Functionally, ferredoxins are iron-sulfur proteins that transfer electrons in a wide variety of metabolic reactions. Donates electrons to the nitrogenase. This Nostoc sp. (strain PCC 7120 / SAG 25.82 / UTEX 2576) protein is Ferredoxin, heterocyst (fdxH).